We begin with the raw amino-acid sequence, 161 residues long: Zinc finger A20 and AN1 domain-containing stress-associated protein 9 (161 aa).

Residues 17–51 (PEAPILCVNNCGFFGSSMTNNMCSKCYRDFVKVTT) form an A20-type zinc finger. Zn(2+) contacts are provided by Cys23, Cys27, Cys39, and Cys42. The segment at 62–99 (FTPASSSKTPLEPAKPDEVPAAAVEDKQAAQEPPKPPS) is disordered. Over residues 75–90 (AKPDEVPAAAVEDKQA) the composition is skewed to basic and acidic residues. An AN1-type zinc finger spans residues 96 to 142 (KPPSNRCLSCRKKVGLTGFQCRCGGTFCSTHRYTEAHDCTFDYKKAG). Zn(2+) is bound by residues Cys102, Cys105, Cys116, Cys118, Cys123, His126, His132, and Cys134.

May be involved in environmental stress response. This chain is Zinc finger A20 and AN1 domain-containing stress-associated protein 9 (SAP9), found in Oryza sativa subsp. japonica (Rice).